Reading from the N-terminus, the 534-residue chain is MSGNNNNPQKPQGSAPLPFGNPGMASASVPGNQGFAQSHMAANFQAQFQFSQAQALAHAQAQSKVQAQLQAQLQAQGMTMNQAQGSPGIGGLGPSSPSLTTPGSLNMKRFQQKPPMRPPGAPASNNTISPMRTMELTPAARKKKQKLPEKSLQERVAAILPESALYTQLLEFESRVDAALTRKKVDIQEALKNPPCIQKTLRIYVFNSFANQNNTIPGNPNADPPTWTLKIIGRILEDGVDPDQPGFVQKANPLHPKFSSFFKRVTVSLDQRLYPENPLIIWENARSPAPQEGFEIKRKGNQEFAASIRLEMNYVPEKFKLSTALMDVLGIEVETRPRIIAAIWHYVKARKLQNPNDPSFFNCDAALQKVFGEEKLKFTMVSQKISHHLSPPPPIHLEHKIKLSGNNPAVSACYDVLVDVPFPIQRDLNNLLANAEKNKEIEACDEAICAAIRKIHEHRRRRAFFLGFSQSPVEFINALIESQSKDLKVVAGEASRNAERERRSDFFNQPWVEDAVIRYLNRRPAAGNDGPGSW.

Residues 1–12 (MSGNNNNPQKPQ) show a composition bias toward polar residues. 2 disordered regions span residues 1-33 (MSGN…PGNQ) and 78-132 (MTMN…SPMR). Over residues 94–105 (PSSPSLTTPGSL) the composition is skewed to low complexity. An SWIB/MDM2 domain is found at 314 to 391 (YVPEKFKLST…SQKISHHLSP (78 aa)).

This sequence belongs to the SMARCD family. Part of a SWI-SNF complex.

It localises to the nucleus. In terms of biological role, involved in transcriptional activation and repression of select genes by chromatin remodeling (alteration of DNA-nucleosome topology). This is SWI/SNF complex component SNF12 homolog from Arabidopsis thaliana (Mouse-ear cress).